The sequence spans 528 residues: Dihydromonacolin L monooxygenase LovA (528 aa).

At 1-23 (MTVDALTQPHHLLSLAWNDTQQH) the chain is on the cytoplasmic side. The chain crosses the membrane as a helical; Signal-anchor for type II membrane protein span at residues 24-44 (GSWFAPLVTTSAGLLCLLLYL). Over 45 to 528 (CSSGRRSELP…DEDIRLPGSL (484 aa)) the chain is Lumenal. Asn-399 is a glycosylation site (N-linked (GlcNAc...) asparagine). Residue Cys-465 participates in heme binding.

Belongs to the cytochrome P450 family. Heme serves as cofactor.

It localises to the membrane. Its subcellular location is the endoplasmic reticulum membrane. The catalysed reaction is dihydromonacolin L carboxylate + reduced [NADPH--hemoprotein reductase] + O2 = monacolin L carboxylate + oxidized [NADPH--hemoprotein reductase] + 2 H2O + H(+). The enzyme catalyses monacolin L carboxylate + reduced [NADPH--hemoprotein reductase] + O2 = monacolin J carboxylate + oxidized [NADPH--hemoprotein reductase] + H2O + H(+). It functions in the pathway polyketide biosynthesis; lovastatin biosynthesis. Its function is as follows. Dihydromonacolin L monooxygenase; part of the gene cluster that mediates the biosynthesis of lovastatin (also known as mevinolin, mevacor or monacolin K), a hypolipidemic inhibitor of (3S)-hydroxymethylglutaryl-coenzyme A (HMG-CoA) reductase (HMGR). The first step in the biosynthesis of lovastatin is the production of dihydromonacolin L acid by the lovastatin nonaketide synthase lovB and the trans-acting enoyl reductase lovC via condensation of one acetyl-CoA unit and 8 malonyl-CoA units. Dihydromonacolin L acid is released from lovB by the thioesterase lovG. Next, dihydromonacolin L acid is oxidized by the dihydromonacolin L monooxygenase lovA twice to form monacolin J acid. The 2-methylbutyrate moiety of lovastatin is synthesized by the lovastatin diketide synthase lovF via condensation of one acetyl-CoA unit and one malonyl-CoA unit. Finally, the covalent attachment of this moiety to monacolin J acid is catalyzed by the transesterase lovD to yield lovastatin. LovD has broad substrate specificity and can also convert monacolin J to simvastatin using alpha-dimethylbutanoyl-S-methyl-3-mercaptopropionate (DMB-S-MMP) as the thioester acyl donor, and can also catalyze the reverse reaction and function as hydrolase in vitro. LovD has much higher activity with LovF-bound 2-methylbutanoate than with free diketide substrates. In Aspergillus terreus (strain NIH 2624 / FGSC A1156), this protein is Dihydromonacolin L monooxygenase LovA.